The following is an 87-amino-acid chain: Cell division topological specificity factor (87 aa).

Belongs to the MinE family.

Its function is as follows. Prevents the cell division inhibition by proteins MinC and MinD at internal division sites while permitting inhibition at polar sites. This ensures cell division at the proper site by restricting the formation of a division septum at the midpoint of the long axis of the cell. The chain is Cell division topological specificity factor from Neisseria meningitidis serogroup C (strain 053442).